The sequence spans 389 residues: Probable tRNA sulfurtransferase (389 aa).

One can recognise a THUMP domain in the interval 57–165 (DEALDRLSKI…EDETYIYHRV (109 aa)). ATP contacts are provided by residues 183 to 184 (LL), Lys267, Gly289, and Gln298.

Belongs to the ThiI family.

It is found in the cytoplasm. The enzyme catalyses [ThiI sulfur-carrier protein]-S-sulfanyl-L-cysteine + a uridine in tRNA + 2 reduced [2Fe-2S]-[ferredoxin] + ATP + H(+) = [ThiI sulfur-carrier protein]-L-cysteine + a 4-thiouridine in tRNA + 2 oxidized [2Fe-2S]-[ferredoxin] + AMP + diphosphate. It catalyses the reaction [ThiS sulfur-carrier protein]-C-terminal Gly-Gly-AMP + S-sulfanyl-L-cysteinyl-[cysteine desulfurase] + AH2 = [ThiS sulfur-carrier protein]-C-terminal-Gly-aminoethanethioate + L-cysteinyl-[cysteine desulfurase] + A + AMP + 2 H(+). It functions in the pathway cofactor biosynthesis; thiamine diphosphate biosynthesis. Functionally, catalyzes the ATP-dependent transfer of a sulfur to tRNA to produce 4-thiouridine in position 8 of tRNAs, which functions as a near-UV photosensor. Also catalyzes the transfer of sulfur to the sulfur carrier protein ThiS, forming ThiS-thiocarboxylate. This is a step in the synthesis of thiazole, in the thiamine biosynthesis pathway. The sulfur is donated as persulfide by IscS. The sequence is that of Probable tRNA sulfurtransferase from Methanothermobacter thermautotrophicus (strain ATCC 29096 / DSM 1053 / JCM 10044 / NBRC 100330 / Delta H) (Methanobacterium thermoautotrophicum).